The sequence spans 141 residues: MSENVMTLQVITPAGVVYDHHANYITARTTNGEIGILPNMISTITGLEIDELKVSRPDDETHVDYIAVNGGIIEIKDSLVTIVADSAERNRDIDVSRAERAKIRAEKALEVAKAEKKSDEIKRVEVALHRALNRLNVSSHN.

It belongs to the ATPase epsilon chain family. In terms of assembly, F-type ATPases have 2 components, CF(1) - the catalytic core - and CF(0) - the membrane proton channel. CF(1) has five subunits: alpha(3), beta(3), gamma(1), delta(1), epsilon(1). CF(0) has three main subunits: a, b and c.

The protein resides in the cell membrane. In terms of biological role, produces ATP from ADP in the presence of a proton gradient across the membrane. This is ATP synthase epsilon chain from Lactococcus lactis subsp. cremoris (strain MG1363).